The primary structure comprises 408 residues: Putative UPF0496 protein 2 (408 aa).

2 consecutive transmembrane segments (helical) span residues 224–244 (RIAR…AIVA) and 252–272 (ALVG…GAAR). The tract at residues 385–408 (MARGLPPPSPATVTTTSEERLTSS) is disordered.

The protein belongs to the UPF0496 family.

It is found in the membrane. This chain is Putative UPF0496 protein 2, found in Oryza sativa subsp. japonica (Rice).